A 41-amino-acid chain; its full sequence is Trypsin inhibitor 2c (41 aa).

2 cysteine pairs are disulfide-bonded: C11–C32 and C15–C28.

Functionally, inhibits bovine trypsin with a Ki of 0.174 nM and trypsin-like proteases from G.mellonella larvae. Has no activity against serine proteases chymotrypsin, subtilisin and elastase. Has no activity against cysteine proteases from beetle gut. This Fagopyrum esculentum (Common buckwheat) protein is Trypsin inhibitor 2c.